The following is a 301-amino-acid chain: Ornithine carbamoyltransferase (301 aa).

Carbamoyl phosphate contacts are provided by residues 47–50 (STRT), glutamine 74, arginine 98, and 125–128 (HPMQ). L-ornithine contacts are provided by residues asparagine 156, aspartate 220, and 224–225 (SM). Residues 260–261 (CL) and arginine 288 each bind carbamoyl phosphate.

Belongs to the aspartate/ornithine carbamoyltransferase superfamily. OTCase family.

The protein resides in the cytoplasm. It catalyses the reaction carbamoyl phosphate + L-ornithine = L-citrulline + phosphate + H(+). It functions in the pathway amino-acid biosynthesis; L-arginine biosynthesis; L-arginine from L-ornithine and carbamoyl phosphate: step 1/3. Functionally, reversibly catalyzes the transfer of the carbamoyl group from carbamoyl phosphate (CP) to the N(epsilon) atom of ornithine (ORN) to produce L-citrulline. In Picrophilus torridus (strain ATCC 700027 / DSM 9790 / JCM 10055 / NBRC 100828 / KAW 2/3), this protein is Ornithine carbamoyltransferase.